The chain runs to 212 residues: Adenylate kinase (212 aa).

Position 10-15 (10-15 (GAGKGT)) interacts with ATP. The NMP stretch occupies residues 30 to 59 (AIGDIFRTIIKTSTSEAELINNYVRQGELI). Residues Arg-36, 57–59 (ELI), 85–88 (GYPR), and Gln-92 each bind AMP. The tract at residues 122–160 (GRYSCKNCGKIYNRYFLQPKTDNVCDVCGSSTFDYRKDD) is LID. Arg-123 contributes to the ATP binding site. Residues Cys-126 and Cys-129 each contribute to the Zn(2+) site. 132-133 (IY) provides a ligand contact to ATP. Zn(2+) contacts are provided by Cys-146 and Cys-149. The AMP site is built by Arg-157 and Arg-168. Position 196 (Lys-196) interacts with ATP.

This sequence belongs to the adenylate kinase family. Monomer.

It is found in the cytoplasm. The catalysed reaction is AMP + ATP = 2 ADP. The protein operates within purine metabolism; AMP biosynthesis via salvage pathway; AMP from ADP: step 1/1. Its function is as follows. Catalyzes the reversible transfer of the terminal phosphate group between ATP and AMP. Plays an important role in cellular energy homeostasis and in adenine nucleotide metabolism. In Rickettsia rickettsii (strain Iowa), this protein is Adenylate kinase.